The chain runs to 492 residues: MSALRRKLGDEYQVVSTSASGGGLPPPRAAPRGKRQRFVDKNGRCNVQHGNLGGETSRYLSDLFTTLVDLKWRWNLFIFVLTYTVAWLFMASMWWVIAYMRGDLNKAHDDSYTPCVANVYNFPSAFLFFIETEATIGYGYRYITDKCPEGIILFLFQSILGSIVDAFLIGCMFIKMSQPKKRAETLMFSEHAAISMRDGKLTLMFRVGNLRNSHMVSAQIRCKLLKSRQTPEGEFLPLDQLELDVGFSTGADQLFLVSPLTICHVIDAKSPFYDLSQRTMQTEQFEIVVILEGIVETTGMTCQARTSYTEDEVLWGHRFFPVISLEEGFFKVDYSQFHATFEVPTPPYSVKEQEEMLLMSSPLIAPAVSNSKERNNSVECLDGLDEVGIKLPSKLQKITGRDDFPKKLLRISSTTSEKAYSMGDLPMKLQRISSVPGNSEEKLVSKATKMMSDPMSQSVADLPPKLQKLSGGGRMEGNLPPKLRKMNSDRFT.

Over 1 to 72 the chain is Cytoplasmic; sequence MSALRRKLGD…LFTTLVDLKW (72 aa). The tract at residues 16–35 is disordered; the sequence is STSASGGGLPPPRAAPRGKR. A helical transmembrane segment spans residues 73–97; it reads RWNLFIFVLTYTVAWLFMASMWWVI. Over 98 to 121 the chain is Extracellular; the sequence is AYMRGDLNKAHDDSYTPCVANVYN. The helical; Pore-forming intramembrane region spans 122-133; sequence FPSAFLFFIETE. Residues 134-140 constitute an intramembrane region (pore-forming); it reads ATIGYGY. Positions 135–140 match the Selectivity filter motif; the sequence is TIGYGY. At 141-149 the chain is on the extracellular side; sequence RYITDKCPE. A helical transmembrane segment spans residues 150–171; the sequence is GIILFLFQSILGSIVDAFLIGC. At 172–492 the chain is on the cytoplasmic side; sequence MFIKMSQPKK…LRKMNSDRFT (321 aa). Residues 174–201 form a polyphosphoinositide (PIP2)-binding region; that stretch reads IKMSQPKKRAETLMFSEHAAISMRDGKL. The interval 452–492 is disordered; it reads SDPMSQSVADLPPKLQKLSGGGRMEGNLPPKLRKMNSDRFT.

The protein belongs to the inward rectifier-type potassium channel (TC 1.A.2.1) family. KCNJ3 subfamily. As to quaternary structure, associates with KCNJ5/GIRK4 or KCNJ6/GIRK2 or KCNJ9/GIRK3 to form a G-protein activated heteromultimer pore-forming unit. The resulting inward current is much larger.

Its subcellular location is the membrane. It carries out the reaction K(+)(in) = K(+)(out). Heteromultimer composed of KCNJ3/GIRK1 and KCNJ5/GIRK4 is activated by phosphatidylinositol 4,5 biphosphate (PtdIns(4,5)P2). Inward rectifier potassium channels are characterized by a greater tendency to allow potassium to flow into the cell rather than out of it. Their voltage dependence is regulated by the concentration of extracellular potassium; as external potassium is raised, the voltage range of the channel opening shifts to more positive voltages. The inward rectification is mainly due to the blockage of outward current by internal magnesium. This potassium channel is controlled by G proteins. This receptor plays a crucial role in regulating the heartbeat. The sequence is that of G protein-activated inward rectifier potassium channel 1 (KCNJ3) from Gallus gallus (Chicken).